The sequence spans 278 residues: Acyl-[acyl-carrier-protein]--UDP-N-acetylglucosamine O-acyltransferase (278 aa).

This sequence belongs to the transferase hexapeptide repeat family. LpxA subfamily. In terms of assembly, homotrimer.

Its subcellular location is the cytoplasm. It carries out the reaction a (3R)-hydroxyacyl-[ACP] + UDP-N-acetyl-alpha-D-glucosamine = a UDP-3-O-[(3R)-3-hydroxyacyl]-N-acetyl-alpha-D-glucosamine + holo-[ACP]. The protein operates within glycolipid biosynthesis; lipid IV(A) biosynthesis; lipid IV(A) from (3R)-3-hydroxytetradecanoyl-[acyl-carrier-protein] and UDP-N-acetyl-alpha-D-glucosamine: step 1/6. In terms of biological role, involved in the biosynthesis of lipid A, a phosphorylated glycolipid that anchors the lipopolysaccharide to the outer membrane of the cell. The chain is Acyl-[acyl-carrier-protein]--UDP-N-acetylglucosamine O-acyltransferase from Brucella anthropi (strain ATCC 49188 / DSM 6882 / CCUG 24695 / JCM 21032 / LMG 3331 / NBRC 15819 / NCTC 12168 / Alc 37) (Ochrobactrum anthropi).